The following is a 184-amino-acid chain: ATP synthase subunit b, chloroplastic (184 aa).

A helical membrane pass occupies residues Leu-27–Leu-49.

This sequence belongs to the ATPase B chain family. In terms of assembly, F-type ATPases have 2 components, F(1) - the catalytic core - and F(0) - the membrane proton channel. F(1) has five subunits: alpha(3), beta(3), gamma(1), delta(1), epsilon(1). F(0) has four main subunits: a(1), b(1), b'(1) and c(10-14). The alpha and beta chains form an alternating ring which encloses part of the gamma chain. F(1) is attached to F(0) by a central stalk formed by the gamma and epsilon chains, while a peripheral stalk is formed by the delta, b and b' chains.

The protein resides in the plastid. The protein localises to the chloroplast thylakoid membrane. Functionally, f(1)F(0) ATP synthase produces ATP from ADP in the presence of a proton or sodium gradient. F-type ATPases consist of two structural domains, F(1) containing the extramembraneous catalytic core and F(0) containing the membrane proton channel, linked together by a central stalk and a peripheral stalk. During catalysis, ATP synthesis in the catalytic domain of F(1) is coupled via a rotary mechanism of the central stalk subunits to proton translocation. In terms of biological role, component of the F(0) channel, it forms part of the peripheral stalk, linking F(1) to F(0). The sequence is that of ATP synthase subunit b, chloroplastic from Gossypium barbadense (Sea Island cotton).